The primary structure comprises 176 residues: Inner membrane-spanning protein YciB (176 aa).

5 helical membrane passes run 3 to 23 (FLFD…WGIF), 49 to 69 (TMLW…LVLH), 72 to 92 (KFIQ…LVAA), 118 to 138 (KLNL…LYVV), and 149 to 169 (FKLF…SLWL).

Belongs to the YciB family.

The protein localises to the cell inner membrane. Functionally, plays a role in cell envelope biogenesis, maintenance of cell envelope integrity and membrane homeostasis. The polypeptide is Inner membrane-spanning protein YciB (Burkholderia mallei (strain NCTC 10247)).